A 635-amino-acid polypeptide reads, in one-letter code: GTPase-GDP dissociation stimulator vimar (635 aa).

ARM repeat units follow at residues 72–118, 346–391, 392–432, and 510–550; these read KSEV…NICY, TDSH…NLVI, PKPN…MTVD, and RSSL…ILSV.

Interacts with Miro.

The protein resides in the endoplasmic reticulum. The protein localises to the mitochondrion. It localises to the cytoplasm. It is found in the cytosol. Its function is as follows. Probably acts as a GEF (guanine nucleotide exchange factor) for the Rho family of small GTP-binding proteins (G proteins) that stimulates the dissociation of GDP to enable subsequent binding of GTP. May also chaperone the processing and/or trafficking of small GTPases independently of GEF activity. By interacting with Miro, promotes mitochondrial fission in response to high calcium concentrations. The protein is GTPase-GDP dissociation stimulator vimar of Drosophila melanogaster (Fruit fly).